We begin with the raw amino-acid sequence, 564 residues long: MVRDWSACGSLLLVMTVAKDRGGPAVAGSGGGVESPELRAAYEVCEAEARQFAVELWAAAETLPVETRPSLYAIASWSAYTDRIIDEGPLEGREERLAQWSADTLADLRAGHSSHPLRRALVDTVRRWGLAEALIEEHLDSARADCAAVPVFETFKDQRRYLRGCSGALAELWVPLLEPRGPEAFRLMSVLGEACQVADLFEDLPDDLAAGRCYLPRQDLRGLGLDVDDLRRGEREEALNAFVDAQLAHWRGLLEETVLAPSTVGARYQIFVHTLLLGAQMHFDEVTLLRSRVLTQGLESLVTGDGRMSRRAARPGPGPVPGHIAVIADGNRRWAEARGLLADQGHRAGIRAVLRLVNAAQRTGIRHVTVYMFSTENWYRSQGEVAALFGAFADWFARGAQTVHELGVRVRWSGRRDRLEESLASSFELLESMTANNDKLTLTICLDYGGREELAAAARALAAEAVAGTIRPEQIGMAEVARHLYVPEMPDVDLLVRTCEQRISNFLPWHLAYAELVFDPAPWPDFDLARLRDAVDSYAGRERRFGGDAELPAQAGNLEPARNG.

Asp-329 is an active-site residue. Position 329 (Asp-329) interacts with Mg(2+). Substrate is bound by residues 330-333 (GNRR), Trp-334, His-346, and 374-376 (STE). Asn-377 (proton acceptor) is an active-site residue. Substrate contacts are provided by residues Trp-378, Arg-380, Arg-497, and 502–504 (RIS). A Mg(2+)-binding site is contributed by Glu-515.

This sequence in the N-terminal section; belongs to the phytoene/squalene synthase family. In the C-terminal section; belongs to the UPP synthase family. In terms of assembly, homodimer. It depends on Mg(2+) as a cofactor.

It catalyses the reaction 2 (2E,6E,10E)-geranylgeranyl diphosphate = 15-cis-phytoene + 2 diphosphate. It functions in the pathway carotenoid biosynthesis; phytoene biosynthesis; all-trans-phytoene from geranylgeranyl diphosphate: step 1/1. In terms of biological role, catalyzes the reaction from prephytoene diphosphate to phytoene. Its function is as follows. Catalyzes the condensation of isopentenyl diphosphate (IPP) with allylic pyrophosphates generating different type of terpenoids. This is Bifunctional protein CrtB/UppS (crtB/uppS3) from Streptomyces coelicolor (strain ATCC BAA-471 / A3(2) / M145).